Here is a 186-residue protein sequence, read N- to C-terminus: Dihydrofolate reductase (186 aa).

Positions Pro3 to Lys184 constitute a DHFR domain. NADP(+) is bound by residues Ala9 and Gly15–Asp21. Glu30–Gln35 provides a ligand contact to substrate. Residue Lys32 is modified to N6-acetyllysine; alternate. Residue Lys32 is modified to N6-succinyllysine; alternate. An NADP(+)-binding site is contributed by Arg54 to Thr56. Residue Arg70 participates in substrate binding. NADP(+)-binding positions include Ser76 to Glu78 and Gly116 to Glu123. Cys162 carries the post-translational modification Cysteine derivative; partial.

This sequence belongs to the dihydrofolate reductase family. In terms of assembly, homodimer.

The protein resides in the mitochondrion. The protein localises to the cytoplasm. It carries out the reaction (6S)-5,6,7,8-tetrahydrofolate + NADP(+) = 7,8-dihydrofolate + NADPH + H(+). Its pathway is cofactor biosynthesis; tetrahydrofolate biosynthesis; 5,6,7,8-tetrahydrofolate from 7,8-dihydrofolate: step 1/1. Key enzyme in folate metabolism. Contributes to the de novo mitochondrial thymidylate biosynthesis pathway. Catalyzes an essential reaction for de novo glycine and purine synthesis, and for DNA precursor synthesis. Binds its own mRNA and that of DHFR2. This is Dihydrofolate reductase (DHFR) from Sus scrofa (Pig).